Consider the following 334-residue polypeptide: Holliday junction branch migration complex subunit RuvB (334 aa).

Residues 4 to 184 form a large ATPase domain (RuvB-L) region; the sequence is ADRLIQPQIQ…FGIPLRLEFY (181 aa). ATP is bound by residues Arg24, Gly65, Lys68, Thr69, Thr70, 131–133, Arg174, Tyr184, and Arg221; that span reads EDY. Thr69 serves as a coordination point for Mg(2+). The small ATPAse domain (RuvB-S) stretch occupies residues 185-255; sequence NIKDLSTIVT…VAEHALDLLD (71 aa). The interval 258-334 is head domain (RuvB-H); the sequence is SEGFDYMDRK…YQHFELIKPE (77 aa). Residues Arg294, Arg313, and Arg318 each contribute to the DNA site.

The protein belongs to the RuvB family. In terms of assembly, homohexamer. Forms an RuvA(8)-RuvB(12)-Holliday junction (HJ) complex. HJ DNA is sandwiched between 2 RuvA tetramers; dsDNA enters through RuvA and exits via RuvB. An RuvB hexamer assembles on each DNA strand where it exits the tetramer. Each RuvB hexamer is contacted by two RuvA subunits (via domain III) on 2 adjacent RuvB subunits; this complex drives branch migration. In the full resolvosome a probable DNA-RuvA(4)-RuvB(12)-RuvC(2) complex forms which resolves the HJ.

The protein localises to the cytoplasm. The enzyme catalyses ATP + H2O = ADP + phosphate + H(+). The RuvA-RuvB-RuvC complex processes Holliday junction (HJ) DNA during genetic recombination and DNA repair, while the RuvA-RuvB complex plays an important role in the rescue of blocked DNA replication forks via replication fork reversal (RFR). RuvA specifically binds to HJ cruciform DNA, conferring on it an open structure. The RuvB hexamer acts as an ATP-dependent pump, pulling dsDNA into and through the RuvAB complex. RuvB forms 2 homohexamers on either side of HJ DNA bound by 1 or 2 RuvA tetramers; 4 subunits per hexamer contact DNA at a time. Coordinated motions by a converter formed by DNA-disengaged RuvB subunits stimulates ATP hydrolysis and nucleotide exchange. Immobilization of the converter enables RuvB to convert the ATP-contained energy into a lever motion, pulling 2 nucleotides of DNA out of the RuvA tetramer per ATP hydrolyzed, thus driving DNA branch migration. The RuvB motors rotate together with the DNA substrate, which together with the progressing nucleotide cycle form the mechanistic basis for DNA recombination by continuous HJ branch migration. Branch migration allows RuvC to scan DNA until it finds its consensus sequence, where it cleaves and resolves cruciform DNA. The polypeptide is Holliday junction branch migration complex subunit RuvB (Shewanella baltica (strain OS223)).